The chain runs to 529 residues: Fibroblast growth factor receptor-like 1 (529 aa).

A signal peptide spans 1-20 (MTRSPALLLLLLGALPSAEA). The Extracellular segment spans residues 21 to 374 (ARGPPRMADK…SSSSTSLPWP (354 aa)). 3 Ig-like C2-type domains span residues 25-111 (PRMA…YTLI), 143-233 (PRFT…YKVD), and 242-350 (PVLT…AFLT). An intrachain disulfide couples Cys-47 to Cys-95. Asn-107 carries N-linked (GlcNAc...) asparagine glycosylation. The segment at 116–151 (ISPGKESPGPGGSSGGQEDPASQQWARPRFTQPSKM) is disordered. Residues Cys-168 and Cys-217 are joined by a disulfide bond. 3 N-linked (GlcNAc...) asparagine glycosylation sites follow: Asn-227, Asn-251, and Asn-289. A disulfide bridge connects residues Cys-264 and Cys-334. The helical transmembrane segment at 375–395 (VVIGIPAGAVFILGTVLLWLC) threads the bilayer. At 396–529 (QTKKKPCAPA…RIENNGGRVS (134 aa)) the chain is on the cytoplasmic side. The disordered stretch occupies residues 405 to 427 (ASTLPVPGHRPPGTSRERSGDKD).

In terms of assembly, interacts with FGF2 with a low affinity. In terms of tissue distribution, highly expressed in the kidney, brain and lung. Weakly expressed in the muscle, thymus, lymph node, stomach, intestine, colon and liver. Expressed in fetal cartilaginous structures like the nasal cartilage, the ribs and the sternum as well as in the cartilaginous rudiments of developing bones such as the vertebrae and the pelvic bone. High expression is found in the muscles of the tongue and the diaphragm.

Its subcellular location is the cell membrane. In terms of biological role, has a negative effect on cell proliferation. The polypeptide is Fibroblast growth factor receptor-like 1 (Fgfrl1) (Mus musculus (Mouse)).